A 278-amino-acid chain; its full sequence is 2-dehydro-3-deoxyphosphooctonate aldolase (278 aa).

The protein belongs to the KdsA family.

The protein resides in the cytoplasm. It carries out the reaction D-arabinose 5-phosphate + phosphoenolpyruvate + H2O = 3-deoxy-alpha-D-manno-2-octulosonate-8-phosphate + phosphate. The protein operates within carbohydrate biosynthesis; 3-deoxy-D-manno-octulosonate biosynthesis; 3-deoxy-D-manno-octulosonate from D-ribulose 5-phosphate: step 2/3. It functions in the pathway bacterial outer membrane biogenesis; lipopolysaccharide biosynthesis. In Dechloromonas aromatica (strain RCB), this protein is 2-dehydro-3-deoxyphosphooctonate aldolase.